We begin with the raw amino-acid sequence, 250 residues long: 2,3-bisphosphoglycerate-dependent phosphoglycerate mutase (250 aa).

Residues 10 to 17, 23 to 24, Arg62, 89 to 92, Lys100, 116 to 117, and 185 to 186 contribute to the substrate site; these read RHGESQWN, TG, ERHY, RR, and GN. His11 (tele-phosphohistidine intermediate) is an active-site residue. Glu89 serves as the catalytic Proton donor/acceptor.

This sequence belongs to the phosphoglycerate mutase family. BPG-dependent PGAM subfamily. In terms of assembly, homodimer.

The catalysed reaction is (2R)-2-phosphoglycerate = (2R)-3-phosphoglycerate. It functions in the pathway carbohydrate degradation; glycolysis; pyruvate from D-glyceraldehyde 3-phosphate: step 3/5. Its function is as follows. Catalyzes the interconversion of 2-phosphoglycerate and 3-phosphoglycerate. The sequence is that of 2,3-bisphosphoglycerate-dependent phosphoglycerate mutase from Erwinia tasmaniensis (strain DSM 17950 / CFBP 7177 / CIP 109463 / NCPPB 4357 / Et1/99).